The sequence spans 529 residues: tRNA-2-methylthio-N(6)-dimethylallyladenosine synthase (529 aa).

An MTTase N-terminal domain is found at arginine 18 to histidine 134. Residues cysteine 27, cysteine 63, cysteine 97, cysteine 171, cysteine 175, and cysteine 178 each coordinate [4Fe-4S] cluster. Residues arginine 157 to glutamate 404 enclose the Radical SAM core domain. The 80-residue stretch at glutamine 407–leucine 486 folds into the TRAM domain.

The protein belongs to the methylthiotransferase family. MiaB subfamily. Monomer. [4Fe-4S] cluster is required as a cofactor.

It localises to the cytoplasm. The catalysed reaction is N(6)-dimethylallyladenosine(37) in tRNA + (sulfur carrier)-SH + AH2 + 2 S-adenosyl-L-methionine = 2-methylsulfanyl-N(6)-dimethylallyladenosine(37) in tRNA + (sulfur carrier)-H + 5'-deoxyadenosine + L-methionine + A + S-adenosyl-L-homocysteine + 2 H(+). Catalyzes the methylthiolation of N6-(dimethylallyl)adenosine (i(6)A), leading to the formation of 2-methylthio-N6-(dimethylallyl)adenosine (ms(2)i(6)A) at position 37 in tRNAs that read codons beginning with uridine. This Mycobacterium sp. (strain KMS) protein is tRNA-2-methylthio-N(6)-dimethylallyladenosine synthase.